The following is a 144-amino-acid chain: Large ribosomal subunit protein uL15 (144 aa).

The segment at 1–48 (MRLNTLSPAAGSKSAAKRVGRGIGSGTGKTCGRGHKGQKSRSGGGVRI) is disordered. Residues 21 to 31 (RGIGSGTGKTC) are compositionally biased toward gly residues.

The protein belongs to the universal ribosomal protein uL15 family. As to quaternary structure, part of the 50S ribosomal subunit.

Its function is as follows. Binds to the 23S rRNA. The chain is Large ribosomal subunit protein uL15 from Shewanella woodyi (strain ATCC 51908 / MS32).